The primary structure comprises 25 residues: Mu-conotoxin CnIIIB (25 aa).

The residue at position 1 (glutamine 1) is a Pyrrolidone carboxylic acid; partial. 3 cysteine pairs are disulfide-bonded: cysteine 3/cysteine 15, cysteine 4/cysteine 21, and cysteine 10/cysteine 22.

This sequence belongs to the conotoxin M superfamily. As to expression, expressed by the venom duct.

Its subcellular location is the secreted. In terms of biological role, mu-conotoxins block voltage-gated sodium channels (Nav). This synthetic toxin blocks slightly but irreversibly tetrodotoxin-resistant VGSCs. This chain is Mu-conotoxin CnIIIB, found in Conus consors (Singed cone).